The primary structure comprises 834 residues: Inner nuclear membrane protein SRC1 (834 aa).

Residues 68–292 are disordered; sequence DEGIVKMDRP…TANGTGHSTP (225 aa). The span at 77–86 shows a compositional bias: low complexity; it reads PSSSPSIASP. Phosphoserine is present on residues Ser78, Ser80, and Ser85. Composition is skewed to acidic residues over residues 114-127 and 142-153; these read VSND…DDDD and DTDEVDDEEDDV. Over residues 154–170 the composition is skewed to polar residues; the sequence is ITSSSNKSDTNDFQQNS. Phosphoserine is present on Ser181. The segment covering 188–198 has biased composition (basic and acidic residues); that stretch reads NSKENKIDNKH. Residues Ser203, Ser204, and Ser206 each carry the phosphoserine modification. The segment covering 243-266 has biased composition (polar residues); sequence IKNTNRKPVSMDNFNDSLTSSGTE. Residue Ser301 is modified to Phosphoserine. A disordered region spans residues 307 to 364; that stretch reads PQKEVPSTILVPEVEQQEPSQSERTPSLFSSEGSGSESEAPLLPEITTPGPHQPMGNT. 2 stretches are compositionally biased toward low complexity: residues 317–329 and 336–345; these read VPEV…SQSE and SSEGSGSESE. At Thr394 the chain carries Phosphothreonine. Phosphoserine is present on Ser427. Transmembrane regions (helical) follow at residues 455 to 475 and 708 to 728; these read LLAL…GLWY and IWLM…LKNY.

It is found in the nucleus inner membrane. In terms of biological role, plays a role in sister chromatid separation. The chain is Inner nuclear membrane protein SRC1 (SRC1) from Saccharomyces cerevisiae (strain ATCC 204508 / S288c) (Baker's yeast).